The following is a 293-amino-acid chain: Histamine N-methyltransferase (293 aa).

Position 28 (Glu-28) interacts with substrate. Residues Gly-60, Glu-89, Gln-94, Ser-120, and Ile-142 each contribute to the S-adenosyl-L-methionine site. Asn-283 provides a ligand contact to substrate.

The protein belongs to the class I-like SAM-binding methyltransferase superfamily. HNMT family. In terms of assembly, monomer.

It is found in the cytoplasm. The catalysed reaction is histamine + S-adenosyl-L-methionine = N(tau)-methylhistamine + S-adenosyl-L-homocysteine + H(+). Inactivates histamine by N-methylation. Plays an important role in degrading histamine and in regulating the airway response to histamine. The polypeptide is Histamine N-methyltransferase (hnmt) (Xenopus tropicalis (Western clawed frog)).